Here is a 268-residue protein sequence, read N- to C-terminus: Zinc transporter ZupT (268 aa).

8 helical membrane-spanning segments follow: residues 6 to 26, 37 to 57, 73 to 93, 126 to 146, 153 to 173, 189 to 209, 211 to 231, and 248 to 268; these read IIFA…GGVI, FLAG…FVEI, GGNW…AVID, VLTA…TFVA, IAIP…IAVA, WATL…ILLM, FLGP…MVFI, and TAIY…LLFI. Fe(2+)-binding residues include asparagine 136 and glutamate 139. The Zn(2+) site is built by glutamate 139 and histidine 164. Residues asparagine 165, glutamate 168, and glutamate 197 each contribute to the Fe(2+) site. Glutamate 168 provides a ligand contact to Zn(2+).

It belongs to the ZIP transporter (TC 2.A.5) family. ZupT subfamily.

Its subcellular location is the cell membrane. It carries out the reaction Zn(2+)(in) = Zn(2+)(out). Functionally, mediates zinc uptake. May also transport other divalent cations. This is Zinc transporter ZupT from Corynebacterium efficiens (strain DSM 44549 / YS-314 / AJ 12310 / JCM 11189 / NBRC 100395).